We begin with the raw amino-acid sequence, 130 residues long: Small ribosomal subunit protein uS9 (130 aa).

The tract at residues 107–130 is disordered; it reads DSRKVERKKPGLKKARKASQFSKR. The span at 111–130 shows a compositional bias: basic residues; that stretch reads VERKKPGLKKARKASQFSKR.

This sequence belongs to the universal ribosomal protein uS9 family.

The protein is Small ribosomal subunit protein uS9 of Streptococcus sanguinis (strain SK36).